Consider the following 320-residue polypeptide: Mitochondrial glutamate carrier 2 (320 aa).

3 Solcar repeats span residues 11-97, 105-215, and 224-313; these read LSIT…LRQL, RNLK…LNQL, and ASFT…GIGE. The next 3 helical transmembrane spans lie at 17-37, 66-86, and 111-131; these read LING…IDLA, FLGM…EKAI, and MLAG…MEML. Serine 150 is subject to Phosphoserine. The next 3 helical transmembrane spans lie at 190-210, 230-250, and 293-313; these read GLGA…PLFA, FVAG…LDVL, and ALVI…GIGE.

This sequence belongs to the mitochondrial carrier (TC 2.A.29) family.

It is found in the mitochondrion inner membrane. It catalyses the reaction L-glutamate(in) + H(+)(in) = L-glutamate(out) + H(+)(out). Its function is as follows. Responsible for the transport of glutamate from the cytosol into the mitochondrial matrix with the concomitant import of a proton (symport system). The protein is Mitochondrial glutamate carrier 2 (Slc25a18) of Rattus norvegicus (Rat).